The following is an 833-amino-acid chain: Major vault protein (833 aa).

MVP repeat units follow at residues 10-52, 54-115, 119-170, 171-223, 224-278, 280-328, 329-380, and 381-433; these read RYYY…VSVP, RHYC…RKLQ, PNTG…TVIY, PNTA…TMLS, ELKA…VSLN, KEYV…LVVG, KEEA…MALD, and RNEG…SIKT.

As to quaternary structure, the vault ribonucleoprotein particle is a huge (400 A x 670 A) cage structure of 12.9 MDa. It consists of a dimer of half-vaults, with each half-vault comprising 39 identical major vault protein (MVP) chains, PARP4 and one or more vault RNAs (vRNAs).

The protein resides in the cytoplasm. The protein localises to the nucleus. Its function is as follows. Required for normal vault structure. Vaults are multi-subunit structures that may act as scaffolds for proteins involved in signal transduction. Vaults may also play a role in nucleo-cytoplasmic transport. The protein is Major vault protein of Leishmania braziliensis.